The sequence spans 160 residues: Ribosomal RNA large subunit methyltransferase H (160 aa).

Positions 76 and 108 each coordinate S-adenosyl-L-methionine.

The protein belongs to the RNA methyltransferase RlmH family. Homodimer.

It localises to the cytoplasm. It carries out the reaction pseudouridine(1915) in 23S rRNA + S-adenosyl-L-methionine = N(3)-methylpseudouridine(1915) in 23S rRNA + S-adenosyl-L-homocysteine + H(+). In terms of biological role, specifically methylates the pseudouridine at position 1915 (m3Psi1915) in 23S rRNA. The polypeptide is Ribosomal RNA large subunit methyltransferase H (Bradyrhizobium diazoefficiens (strain JCM 10833 / BCRC 13528 / IAM 13628 / NBRC 14792 / USDA 110)).